Here is a 196-residue protein sequence, read N- to C-terminus: Holliday junction branch migration complex subunit RuvA (196 aa).

Positions 1–63 are domain I; sequence MINKIYGKII…EDEIKLFGFL (63 aa). The domain II stretch occupies residues 64–138; it reads NVSEREVFEE…GKLVKADELT (75 aa). A region of interest (flexible linker) is located at residue Thr-138. The segment at 139–196 is domain III; that stretch reads SSVFKFKDLEQSIVNMGFDRKLVVAAIKEIMLIDEFLMLREVEQEQFLFRETLKRLSG.

The protein belongs to the RuvA family. As to quaternary structure, homotetramer. Forms an RuvA(8)-RuvB(12)-Holliday junction (HJ) complex. HJ DNA is sandwiched between 2 RuvA tetramers; dsDNA enters through RuvA and exits via RuvB. An RuvB hexamer assembles on each DNA strand where it exits the tetramer. Each RuvB hexamer is contacted by two RuvA subunits (via domain III) on 2 adjacent RuvB subunits; this complex drives branch migration. In the full resolvosome a probable DNA-RuvA(4)-RuvB(12)-RuvC(2) complex forms which resolves the HJ.

The protein localises to the cytoplasm. In terms of biological role, the RuvA-RuvB-RuvC complex processes Holliday junction (HJ) DNA during genetic recombination and DNA repair, while the RuvA-RuvB complex plays an important role in the rescue of blocked DNA replication forks via replication fork reversal (RFR). RuvA specifically binds to HJ cruciform DNA, conferring on it an open structure. The RuvB hexamer acts as an ATP-dependent pump, pulling dsDNA into and through the RuvAB complex. HJ branch migration allows RuvC to scan DNA until it finds its consensus sequence, where it cleaves and resolves the cruciform DNA. This is Holliday junction branch migration complex subunit RuvA from Borrelia hermsii (strain HS1 / DAH).